The chain runs to 84 residues: Small ribosomal subunit protein uS17 (84 aa).

The protein belongs to the universal ribosomal protein uS17 family. Part of the 30S ribosomal subunit.

In terms of biological role, one of the primary rRNA binding proteins, it binds specifically to the 5'-end of 16S ribosomal RNA. The polypeptide is Small ribosomal subunit protein uS17 (Vibrio cholerae serotype O1 (strain ATCC 39541 / Classical Ogawa 395 / O395)).